The sequence spans 495 residues: Amorpha-4,11-diene 12-monooxygenase (495 aa).

Over 1 to 6 (MKSILK) the chain is Cytoplasmic. The helical; Signal-anchor for type II membrane protein transmembrane segment at 7-29 (AMALSLTTSIALATILLFVYKFA) threads the bilayer. The Lumenal portion of the chain corresponds to 30–495 (TRSKSTKKSL…KTELLLVPSF (466 aa)). N-linked (GlcNAc...) asparagine glycans are attached at residues N176, N261, N267, N386, and N417. Residue C439 coordinates heme.

Belongs to the cytochrome P450 family. Heme serves as cofactor. Highly expressed both in apical and sub-apical cells of glandular secretory trichomes. Detected in flower buds, leaves and roots. Also present in non-glandular trichome cells.

It localises to the endoplasmic reticulum membrane. The enzyme catalyses (+)-amorpha-4,11-diene + 3 reduced [NADPH--hemoprotein reductase] + 3 O2 = (+)-artemisinate + 3 oxidized [NADPH--hemoprotein reductase] + 4 H2O + 4 H(+). Its pathway is sesquiterpene biosynthesis. Its function is as follows. Involved in the biosynthesis of the antimalarial endoperoxide artemisinin. Catalyzes three consecutive oxidations of amorpha-4,11-diene to produce artemisinic acid, with artemisinic alcohol and artemisinic aldehyde as intermediates products, but is unable to oxidize germacrene A. No activity with limonene, alpha-pinene, beta-pinene, pinocarveol, (-)-alloisolongifolene, caryophyllene, (-)-alpha-gurjunene, (+)-gamma-gurjunene, (+)-ledene, (+)-beta-selinene and (+)-valencene as substrates. The sequence is that of Amorpha-4,11-diene 12-monooxygenase from Artemisia annua (Sweet wormwood).